Consider the following 2178-residue polypeptide: DNA-directed RNA polymerase subunit beta (2178 aa).

Insert regions lie at residues 269-325, 714-1508, and 1703-1900; these read SKKI…TPFV, KRID…LFYN, and KGND…LQPM.

The protein belongs to the RNA polymerase beta chain family. As to quaternary structure, in plastids the minimal PEP RNA polymerase catalytic core is composed of four subunits: alpha, beta, beta', and beta''. When a (nuclear-encoded) sigma factor is associated with the core the holoenzyme is formed, which can initiate transcription.

It localises to the plastid. Its subcellular location is the chloroplast. The enzyme catalyses RNA(n) + a ribonucleoside 5'-triphosphate = RNA(n+1) + diphosphate. Functionally, DNA-dependent RNA polymerase catalyzes the transcription of DNA into RNA using the four ribonucleoside triphosphates as substrates. The polypeptide is DNA-directed RNA polymerase subunit beta (Tupiella akineta (Green alga)).